The following is a 784-amino-acid chain: Toll-like receptor 2 (784 aa).

The N-terminal stretch at 1–20 is a signal peptide; that stretch reads MPRALWTAWVWAVIILSMEG. At 21–587 the chain is on the extracellular side; sequence ASHQASSLSC…ARLSLSECHR (567 aa). Cys30 and Cys36 form a disulfide bridge. 19 LRR repeats span residues 54–77, 78–101, 102–125, 126–150, 151–175, 176–199, 200–223, 224–250, 251–278, 279–308, 309–337, 338–361, 362–388, 389–414, 415–437, 438–457, 458–478, 479–500, and 501–524; these read VKSLDLSNNEITYVSNRDLQRCVN, LKTLRLGANEIHTVEEDSFFHLRN, LEYLDLSYNRLSNLSSSWFRSLYA, LKFLNLLGNVYKTLGETSLFSHLPN, LRTLKVGNSNSFTEIHEKDFTGLIF, LEELEISAQNLQIYVPKSLKSIQN, ISHLILHLKQPVLLVDILVDIVSS, LDCLELRDTNLHTFHFSEASISEMNTS, VKKLIFRNVQFTDESFVEVVKLFNYVSG, ILEVEFDDCTHDGIGDFRALSLDRIRHLGN, VETLTIRKLHIPQFFLFHDLSSIYPLTGK, VKRVTIESSKVFLVPCLLSQHLKS, LEYLDLSENLMSEETLKNSACKDAWPF, LQTLVLRQNRLKSLEKTGELLLTLKN, LNNLDISKNNFLSMPETCQWPGK, MKQLNLSSTRIHSLTQCLPQ, TLEILDVSNNNLDSFSLILPQ, LKELYISRNKLKTLPDASFLPV, and LSVMRISGNIINTFSKEQLDSFPQ. N-linked (GlcNAc...) asparagine glycosylation occurs at Asn114. Asn199 carries N-linked (GlcNAc...) asparagine glycosylation. Asn248 is a glycosylation site (N-linked (GlcNAc...) asparagine). The cysteines at positions 353 and 382 are disulfide-linked. The cysteines at positions 432 and 454 are disulfide-linked. An N-linked (GlcNAc...) asparagine glycan is attached at Asn442. The 55-residue stretch at 525 to 579 folds into the LRRCT domain; that stretch reads LKALEAGGNNFICSCDFLSFTQGQQALARVLVDWPDGYRCDAPSHVRGQRVQDAR. A helical transmembrane segment spans residues 588 to 608; it reads AAVVSAVCCALFLLLLLTGVL. Residues 609-784 are Cytoplasmic-facing; sequence CHRFHGLWYM…WLNLRAAIRS (176 aa). Residues 639–782 form the TIR domain; the sequence is LCYDAFVSYS…AFWLNLRAAI (144 aa). Lys754 participates in a covalent cross-link: Glycyl lysine isopeptide (Lys-Gly) (interchain with G-Cter in ubiquitin). The ATG16L1-binding motif signature appears at 761 to 778; the sequence is YLEWPTDETQQEAFWLNL.

The protein belongs to the Toll-like receptor family. As to quaternary structure, interacts with LY96, TLR1 and TLR6 (via extracellular domain). TLR2 seems to exist in heterodimers with either TLR1 or TLR6 before stimulation by the ligand. The heterodimers form bigger oligomers in response to their corresponding ligands as well as further heterotypic associations with other receptors such as CD14 and/or CD36. Binds MYD88 (via TIR domain). Interacts with TICAM1. Interacts with CNPY3. Interacts with ATG16L1. Interacts with PPP1R11. Interacts with TICAM2. Interacts with TIRAP. Ubiquitinated at Lys-754 by PPP1R11, leading to its degradation. Deubiquitinated by USP2. Post-translationally, glycosylation of Asn-442 is critical for secretion of the N-terminal ectodomain of TLR2.

Its subcellular location is the membrane. It localises to the cytoplasmic vesicle. The protein resides in the phagosome membrane. The protein localises to the membrane raft. Functionally, cooperates with LY96 to mediate the innate immune response to bacterial lipoproteins and other microbial cell wall components. Cooperates with TLR1 or TLR6 to mediate the innate immune response to bacterial lipoproteins or lipopeptides. Acts via MYD88 and TRAF6, leading to NF-kappa-B activation, cytokine secretion and the inflammatory response. May also promote apoptosis in response to lipoproteins. Forms activation clusters composed of several receptors depending on the ligand, these clusters trigger signaling from the cell surface and subsequently are targeted to the Golgi in a lipid-raft dependent pathway. Forms the cluster TLR2:TLR6:CD14:CD36 in response to diacylated lipopeptides and TLR2:TLR1:CD14 in response to triacylated lipopeptides. This chain is Toll-like receptor 2 (TLR2), found in Capra hircus (Goat).